The primary structure comprises 42 residues: Cytochrome b6-f complex subunit 7 (42 aa).

The chain crosses the membrane as a helical span at residues Ala19 to Leu37.

The protein belongs to the PetM family. The 4 large subunits of the cytochrome b6-f complex are cytochrome b6, subunit IV (17 kDa polypeptide, PetD), cytochrome f and the Rieske protein, while the 4 small subunits are PetG, PetL, PetM and PetN. The complex functions as a dimer.

It localises to the plastid. The protein resides in the chloroplast thylakoid membrane. Its function is as follows. Component of the cytochrome b6-f complex, which mediates electron transfer between photosystem II (PSII) and photosystem I (PSI), cyclic electron flow around PSI, and state transitions. This chain is Cytochrome b6-f complex subunit 7, found in Phaeodactylum tricornutum (strain CCAP 1055/1).